We begin with the raw amino-acid sequence, 324 residues long: Aspartate carbamoyltransferase catalytic subunit (324 aa).

Carbamoyl phosphate is bound by residues R55 and T56. K83 is a binding site for L-aspartate. Carbamoyl phosphate is bound by residues R105, H135, and Q138. Residues R173 and R227 each coordinate L-aspartate. 2 residues coordinate carbamoyl phosphate: G268 and P269.

This sequence belongs to the aspartate/ornithine carbamoyltransferase superfamily. ATCase family. In terms of assembly, heterododecamer (2C3:3R2) of six catalytic PyrB chains organized as two trimers (C3), and six regulatory PyrI chains organized as three dimers (R2).

The catalysed reaction is carbamoyl phosphate + L-aspartate = N-carbamoyl-L-aspartate + phosphate + H(+). The protein operates within pyrimidine metabolism; UMP biosynthesis via de novo pathway; (S)-dihydroorotate from bicarbonate: step 2/3. In terms of biological role, catalyzes the condensation of carbamoyl phosphate and aspartate to form carbamoyl aspartate and inorganic phosphate, the committed step in the de novo pyrimidine nucleotide biosynthesis pathway. The protein is Aspartate carbamoyltransferase catalytic subunit of Nocardioides sp. (strain ATCC BAA-499 / JS614).